A 418-amino-acid polypeptide reads, in one-letter code: Probable endo-beta-1,4-glucanase celB (418 aa).

Residues 1–18 form the signal peptide; the sequence is MVRTFAVTALALLPLVAA. Asn-46, Asn-118, and Asn-136 each carry an N-linked (GlcNAc...) asparagine glycan. Glu-215 acts as the Nucleophile in catalysis. Glu-220 (proton donor) is an active-site residue. Residues Asn-234 and Asn-291 are each glycosylated (N-linked (GlcNAc...) asparagine).

Belongs to the glycosyl hydrolase 7 (cellulase C) family.

The protein resides in the secreted. It catalyses the reaction Endohydrolysis of (1-&gt;4)-beta-D-glucosidic linkages in cellulose, lichenin and cereal beta-D-glucans.. In terms of biological role, has endoglucanase activity on substrates containing beta-1,4 glycosidic bonds, like in carboxymethylcellulose (CMC), hydroxyethylcellulose (HEC) and beta-glucan. Involved in the degradation of complex natural cellulosic substrates. This chain is Probable endo-beta-1,4-glucanase celB (celB), found in Aspergillus clavatus (strain ATCC 1007 / CBS 513.65 / DSM 816 / NCTC 3887 / NRRL 1 / QM 1276 / 107).